Here is a 433-residue protein sequence, read N- to C-terminus: MPCGKQGNLQVPGSKVLPGLGEGCKEMWLRKVIYGGEVWGKSPEPEFPSLVNLCQSWKINNLMSTVHSDEAGMLSYFLFEELMRCDKDSMPDGNLSEEEKLFLSYFPLHKFELEQNIKELNTLADQVDTTHELLTKTSLVASSSGAVSGVMNILGLALAPVTAGGSLMLSATGTGLGAAAAITNIVTNVLENRSNSAARDKASRLGPLTTSHEAFGGINWSEIEAAGFCVNKCVKAIQGIKDLHAYQMAKSNSGFMAMVKNFVAKRHIPFWTARGVQRAFEGTTLAMTNGAWVMGAAGAGFLLMKDMSSFLQSWKHLEDGARTETAEELRALAKKLEQELDRLTQHHRHLPQKASQTCSSSRGRAVRGSRVVKPEGSRSPLPWPVVEHQPRLGPGVALRTPKRTVSAPRMLGHQPAPPAPARKGRQAPGRHRQ.

Residues H346–Q433 form a disordered region. Residues S359 to V371 show a composition bias toward low complexity. A compositionally biased stretch (basic residues) spans R422–Q433.

It belongs to the apolipoprotein L family. As to expression, low level of expression; detected in uterus, testis, skeletal muscle and stomach.

Its subcellular location is the cytoplasm. In terms of biological role, may affect the movement of lipids in the cytoplasm or allow the binding of lipids to organelles. The protein is Apolipoprotein L5 (APOL5) of Homo sapiens (Human).